Here is a 63-residue protein sequence, read N- to C-terminus: Jingdongin-1-MT1 (63 aa).

The N-terminal stretch at 1-22 (MFTLKKSLLLLFFLGTINLSLC) is a signal peptide. Residues 23–44 (EQERDADEEERRDDDEMDVEVE) constitute a propeptide, removed in mature form. Cys57 and Cys63 are disulfide-bonded.

This sequence belongs to the frog skin active peptide (FSAP) family. Brevinin subfamily. As to expression, expressed by the skin glands.

The protein localises to the secreted. Functionally, antimicrobial peptide. Active against some Gram-negative and a variety of Gram-positive bacterial strains. Active against fungus C.glabrata 090902 but not against C.neoformans 201211. Shows hemolytic activity against human erythrocytes. In Amolops mantzorum (Sichuan torrent frog), this protein is Jingdongin-1-MT1.